Reading from the N-terminus, the 74-residue chain is Exodeoxyribonuclease 7 small subunit (74 aa).

The protein belongs to the XseB family. Heterooligomer composed of large and small subunits.

The protein localises to the cytoplasm. It catalyses the reaction Exonucleolytic cleavage in either 5'- to 3'- or 3'- to 5'-direction to yield nucleoside 5'-phosphates.. In terms of biological role, bidirectionally degrades single-stranded DNA into large acid-insoluble oligonucleotides, which are then degraded further into small acid-soluble oligonucleotides. This chain is Exodeoxyribonuclease 7 small subunit, found in Clostridium botulinum (strain Eklund 17B / Type B).